The sequence spans 370 residues: Alpha-ketoglutarate-dependent xanthine dioxygenase xanA (370 aa).

Substrate is bound at residue H107. H149 and D151 together coordinate Fe cation. The 2-oxoglutarate site is built by T195 and W325. Residue H340 participates in Fe cation binding. Residue R352 participates in 2-oxoglutarate binding.

Belongs to the TfdA dioxygenase family. Requires Fe(2+) as cofactor. Post-translationally, glycosylated. Is subject to both N- and O-linked glycosylation. In terms of processing, phosphorylated.

It localises to the cytoplasm. It is found in the cytosol. The enzyme catalyses xanthine + 2-oxoglutarate + O2 = urate + succinate + CO2. With respect to regulation, cu(2+) and Zn(2+) completely inhibit the xanthine dioxygenase activity, whereas Co(2+), Mn(2+), and Ni(2+) partially inhibit the activity. The inactive metal ions are presumed to compete for the Fe(2+)-binding site. N-oxalylglycine (NOG), a known inhibitor of several Fe(2+)/alpha-ketoglutarate-dependent dioxygenase family members, competes with alpha-ketoglutarate and provides a Ki of 0.12 uM for inhibition. 6,8-dihydroxypurine acts as a slow-binding competitive inhibitor. The thiol-specific inhibitors 5,5'-dithiobis(2-nitrobenzoic acid) (DTNB) and iodoacetamide, inhibit also the catalytic activity. In terms of biological role, alpha-ketoglutarate-dependent xanthine dioxygenase is a non-heme mononuclear Fe(2+) enzyme that decarboxylates alpha-ketoglutarate to succinate and CO(2) while hydroxylating xanthine to generate uric acid. Allows xanthine utilization as a nitrogen source. Whereas xanA is highly specific for xanthine, alpha-ketoadipic acid can replace alpha-ketoglutarate as a cosubstrate. Exhibits ferroxidase activity in the absence of substrates. This Emericella nidulans (Aspergillus nidulans) protein is Alpha-ketoglutarate-dependent xanthine dioxygenase xanA.